A 259-amino-acid chain; its full sequence is Deoxyribose-phosphate aldolase (259 aa).

Aspartate 102 acts as the Proton donor/acceptor in catalysis. Lysine 167 (schiff-base intermediate with acetaldehyde) is an active-site residue. The active-site Proton donor/acceptor is the lysine 201.

Belongs to the DeoC/FbaB aldolase family. DeoC type 2 subfamily.

The protein resides in the cytoplasm. It carries out the reaction 2-deoxy-D-ribose 5-phosphate = D-glyceraldehyde 3-phosphate + acetaldehyde. The protein operates within carbohydrate degradation; 2-deoxy-D-ribose 1-phosphate degradation; D-glyceraldehyde 3-phosphate and acetaldehyde from 2-deoxy-alpha-D-ribose 1-phosphate: step 2/2. Catalyzes a reversible aldol reaction between acetaldehyde and D-glyceraldehyde 3-phosphate to generate 2-deoxy-D-ribose 5-phosphate. This is Deoxyribose-phosphate aldolase from Photorhabdus laumondii subsp. laumondii (strain DSM 15139 / CIP 105565 / TT01) (Photorhabdus luminescens subsp. laumondii).